The sequence spans 337 residues: Protein RecA (337 aa).

Residue 66 to 73 (GPESSGKT) coordinates ATP.

It belongs to the RecA family.

The protein resides in the cytoplasm. In terms of biological role, can catalyze the hydrolysis of ATP in the presence of single-stranded DNA, the ATP-dependent uptake of single-stranded DNA by duplex DNA, and the ATP-dependent hybridization of homologous single-stranded DNAs. It interacts with LexA causing its activation and leading to its autocatalytic cleavage. This Mesomycoplasma hyopneumoniae (strain J / ATCC 25934 / NCTC 10110) (Mycoplasma hyopneumoniae) protein is Protein RecA.